We begin with the raw amino-acid sequence, 362 residues long: Heme A synthase (362 aa).

5 helical membrane passes run alanine 11–glycine 31, valine 102–glycine 122, leucine 128–serine 148, valine 159–leucine 179, and alanine 198–leucine 218. Histidine 262 contributes to the heme binding site. 3 consecutive transmembrane segments (helical) span residues methionine 264–glycine 286, leucine 297–isoleucine 317, and serine 318–alanine 338. Histidine 323 contributes to the heme binding site.

This sequence belongs to the COX15/CtaA family. Type 2 subfamily. Interacts with CtaB. It depends on heme b as a cofactor.

Its subcellular location is the cell membrane. The catalysed reaction is Fe(II)-heme o + 2 A + H2O = Fe(II)-heme a + 2 AH2. It participates in porphyrin-containing compound metabolism; heme A biosynthesis; heme A from heme O: step 1/1. Functionally, catalyzes the conversion of heme O to heme A by two successive hydroxylations of the methyl group at C8. The first hydroxylation forms heme I, the second hydroxylation results in an unstable dihydroxymethyl group, which spontaneously dehydrates, resulting in the formyl group of heme A. The chain is Heme A synthase from Bradyrhizobium sp. (strain ORS 278).